A 228-amino-acid polypeptide reads, in one-letter code: Deoxyribose-phosphate aldolase (228 aa).

Asp96 (proton donor/acceptor) is an active-site residue. Lys157 acts as the Schiff-base intermediate with acetaldehyde in catalysis. The active-site Proton donor/acceptor is the Lys185.

It belongs to the DeoC/FbaB aldolase family. DeoC type 1 subfamily.

Its subcellular location is the cytoplasm. It carries out the reaction 2-deoxy-D-ribose 5-phosphate = D-glyceraldehyde 3-phosphate + acetaldehyde. Its pathway is carbohydrate degradation; 2-deoxy-D-ribose 1-phosphate degradation; D-glyceraldehyde 3-phosphate and acetaldehyde from 2-deoxy-alpha-D-ribose 1-phosphate: step 2/2. Functionally, catalyzes a reversible aldol reaction between acetaldehyde and D-glyceraldehyde 3-phosphate to generate 2-deoxy-D-ribose 5-phosphate. The protein is Deoxyribose-phosphate aldolase of Picosynechococcus sp. (strain ATCC 27264 / PCC 7002 / PR-6) (Agmenellum quadruplicatum).